Consider the following 1378-residue polypeptide: Cell surface hyaluronidase (1378 aa).

Positions 1–77 (MQVNDGPSSH…GNRREQAQNQ (77 aa)) are disordered. Topologically, residues 1–82 (MQVNDGPSSH…QAQNQQRKNT (82 aa)) are cytoplasmic. A compositionally biased stretch (pro residues) spans 36 to 58 (RSPPPAKAPPPPPLKPPVPPPAR). The helical; Signal-anchor for type II membrane protein transmembrane segment at 83–103 (YICVGIFFGIFLLILILVLSL) threads the bilayer. Residues 104-1378 (TSKDVLDENC…MDLELLKKIS (1275 aa)) are Extracellular-facing. Positions 121-247 (RSWKPGHDLK…ERMSWTFLTR (127 aa)) constitute a G8 domain. 5 N-linked (GlcNAc...) asparagine glycosylation sites follow: Asn-171, Asn-264, Asn-360, Asn-527, and Asn-639. Positions 257–414 (GDHAFQKNFS…YPTTGFQVDA (158 aa)) constitute a GG-type lectin 1 domain. The PbH1 1 repeat unit spans residues 672 to 694 (HPNNHLISNSAAGSQDAGIWYVF). A glycan (N-linked (GlcNAc...) asparagine) is linked at Asn-696. One copy of the PbH1 2 repeat lies at 714 to 736 (TPLGTFFNNRVHSNFKAGLFIDR). Asn-742, Asn-854, Asn-905, Asn-996, Asn-1069, Asn-1160, and Asn-1221 each carry an N-linked (GlcNAc...) asparagine glycan. The 161-residue stretch at 1203-1363 (NSYLQTQIKS…LEEYSCPPKK (161 aa)) folds into the GG-type lectin 2 domain.

The protein belongs to the CEMIP family. It depends on Ca(2+) as a cofactor.

Its subcellular location is the cell membrane. The catalysed reaction is Random hydrolysis of (1-&gt;4)-linkages between N-acetyl-beta-D-glucosamine and D-glucuronate residues in hyaluronate.. Functionally, cell surface hyaluronidase that mediates the initial cleavage of extracellular high-molecular-weight hyaluronan into intermediate-size hyaluronan. Acts as a regulator of angiogenesis in embryos by mediating degradation of extracellular hyaluronan, thereby promoting VEGF signaling. Acts as a regulator of heart development during myocardial and endocardial morphogenesis: involved in the looping stage of heart morphogenesis. Stimulates migration of endocardial cells and increases both myocardial and endocardial fusion. Involved in the restriction of endocardial cushions (ECs) formation to the atrioventricular canal (AVC). Also required for muscle fiber attachment. Is very specific to hyaluronan; not able to cleave chondroitin sulfate or dermatan sulfate. This Danio rerio (Zebrafish) protein is Cell surface hyaluronidase (cemip2).